The sequence spans 162 residues: Peptidyl-prolyl cis-trans isomerase-like 1 (162 aa).

Residues 1–155 enclose the PPIase cyclophilin-type domain; that stretch reads MATDVAFDTS…DGVKILRARI (155 aa).

The protein belongs to the cyclophilin-type PPIase family. PPIL1 subfamily.

It catalyses the reaction [protein]-peptidylproline (omega=180) = [protein]-peptidylproline (omega=0). In terms of biological role, PPIases accelerate the folding of proteins. It catalyzes the cis-trans isomerization of proline imidic peptide bonds in oligopeptides. This chain is Peptidyl-prolyl cis-trans isomerase-like 1 (cypC), found in Aspergillus niger.